Consider the following 359-residue polypeptide: Guanine nucleotide-binding protein subunit alpha-11 (359 aa).

Residues Cys9 and Cys10 are each lipidated (S-palmitoyl cysteine). Residues 38-359 (RELKLLLLGT…QLNLKEYNLV (322 aa)) enclose the G-alpha domain. The interval 41–54 (KLLLLGTGESGKST) is G1 motif. GTP contacts are provided by residues 46 to 53 (GTGESGKS) and 180 to 183 (LRVR). Ser53 serves as a coordination point for Mg(2+). The segment at 178–186 (DVLRVRVPT) is G2 motif. Thr186 is a binding site for Mg(2+). Residues 201–210 (FRMVDVGGQR) are G3 motif. Residues 270-277 (ILFLNKKD) form a G4 motif region. Residues 274–277 (NKKD) and Ala331 contribute to the GTP site. A G5 motif region spans residues 329–334 (TCATDT).

This sequence belongs to the G-alpha family. G(q) subfamily. G proteins are composed of 3 units; alpha, beta and gamma. The alpha chain contains the guanine nucleotide binding site. Interacts with RGS22. Interacts with NTSR1.

Its subcellular location is the cell membrane. It localises to the cytoplasm. It carries out the reaction GTP + H2O = GDP + phosphate + H(+). In terms of biological role, guanine nucleotide-binding proteins (G proteins) function as transducers downstream of G protein-coupled receptors (GPCRs) in numerous signaling cascades. The alpha chain contains the guanine nucleotide binding site and alternates between an active, GTP-bound state and an inactive, GDP-bound state. Signaling by an activated GPCR promotes GDP release and GTP binding. The alpha subunit has a low GTPase activity that converts bound GTP to GDP, thereby terminating the signal. Both GDP release and GTP hydrolysis are modulated by numerous regulatory proteins. Signaling is mediated via phospholipase C-beta-dependent inositol lipid hydrolysis for signal propagation: activates phospholipase C-beta: following GPCR activation, GNA11 activates PLC-beta (PLCB1, PLCB2, PLCB3 or PLCB4), leading to production of diacylglycerol (DAG) and inositol 1,4,5-trisphosphate (IP3). Transduces FFAR4 signaling in response to long-chain fatty acids (LCFAs). Together with GNAQ, required for heart development. In the respiratory epithelium, transmits OXGR1-dependent signals that lead to downstream intracellular Ca(2+) release and mucocilliary clearance of airborne pathogens. This Rattus norvegicus (Rat) protein is Guanine nucleotide-binding protein subunit alpha-11 (Gna11).